We begin with the raw amino-acid sequence, 135 residues long: Peptide methionine sulfoxide reductase MsrB (135 aa).

Residues 13–135 (DADWREQLTP…NGHSMVFEPV (123 aa)) form the MsrB domain. 4 residues coordinate Zn(2+): cysteine 52, cysteine 55, cysteine 101, and cysteine 104. Catalysis depends on cysteine 124, which acts as the Nucleophile.

Belongs to the MsrB Met sulfoxide reductase family. It depends on Zn(2+) as a cofactor.

The enzyme catalyses L-methionyl-[protein] + [thioredoxin]-disulfide + H2O = L-methionyl-(R)-S-oxide-[protein] + [thioredoxin]-dithiol. This chain is Peptide methionine sulfoxide reductase MsrB, found in Agrobacterium fabrum (strain C58 / ATCC 33970) (Agrobacterium tumefaciens (strain C58)).